We begin with the raw amino-acid sequence, 215 residues long: Orotate phosphoribosyltransferase (215 aa).

K26 contributes to the 5-phospho-alpha-D-ribose 1-diphosphate binding site. 34–35 is an orotate binding site; sequence FF. Residues 72-73, R99, K100, K103, H105, and 124-132 each bind 5-phospho-alpha-D-ribose 1-diphosphate; these read YK and DDVITAGTA. 2 residues coordinate orotate: T128 and R156.

This sequence belongs to the purine/pyrimidine phosphoribosyltransferase family. PyrE subfamily. As to quaternary structure, homodimer. Requires Mg(2+) as cofactor.

The enzyme catalyses orotidine 5'-phosphate + diphosphate = orotate + 5-phospho-alpha-D-ribose 1-diphosphate. The protein operates within pyrimidine metabolism; UMP biosynthesis via de novo pathway; UMP from orotate: step 1/2. Its function is as follows. Catalyzes the transfer of a ribosyl phosphate group from 5-phosphoribose 1-diphosphate to orotate, leading to the formation of orotidine monophosphate (OMP). The chain is Orotate phosphoribosyltransferase from Yersinia pseudotuberculosis serotype O:1b (strain IP 31758).